The primary structure comprises 344 residues: Glycerol-3-phosphate dehydrogenase [NAD(P)+] (344 aa).

Residues Trp-18, His-38, and Lys-115 each contribute to the NADPH site. Sn-glycerol 3-phosphate contacts are provided by Lys-115, Gly-144, and Thr-146. Ala-148 contacts NADPH. Lys-199, Asp-252, Ser-262, Arg-263, and Asn-264 together coordinate sn-glycerol 3-phosphate. Lys-199 (proton acceptor) is an active-site residue. Position 263 (Arg-263) interacts with NADPH. Positions 288 and 290 each coordinate NADPH.

Belongs to the NAD-dependent glycerol-3-phosphate dehydrogenase family.

It is found in the cytoplasm. The catalysed reaction is sn-glycerol 3-phosphate + NAD(+) = dihydroxyacetone phosphate + NADH + H(+). It carries out the reaction sn-glycerol 3-phosphate + NADP(+) = dihydroxyacetone phosphate + NADPH + H(+). Its pathway is membrane lipid metabolism; glycerophospholipid metabolism. Catalyzes the reduction of the glycolytic intermediate dihydroxyacetone phosphate (DHAP) to sn-glycerol 3-phosphate (G3P), the key precursor for phospholipid synthesis. The polypeptide is Glycerol-3-phosphate dehydrogenase [NAD(P)+] (Hydrogenovibrio crunogenus (strain DSM 25203 / XCL-2) (Thiomicrospira crunogena)).